Reading from the N-terminus, the 345-residue chain is Putative mediator of RNA polymerase II transcription subunit 7 (345 aa).

Composition is skewed to low complexity over residues 1-27 and 88-126; these read MNTS…TPQQ and NNNN…NNNN. Disordered regions lie at residues 1–130 and 292–315; these read MNTS…KATT and TPLP…NNSQ.

Belongs to the Mediator complex subunit 7 family. In terms of assembly, component of the Mediator complex.

The protein localises to the nucleus. Functionally, component of the Mediator complex, a coactivator involved in the regulated transcription of nearly all RNA polymerase II-dependent genes. Mediator functions as a bridge to convey information from gene-specific regulatory proteins to the basal RNA polymerase II transcription machinery. Mediator is recruited to promoters by direct interactions with regulatory proteins and serves as a scaffold for the assembly of a functional preinitiation complex with RNA polymerase II and the general transcription factors. This chain is Putative mediator of RNA polymerase II transcription subunit 7 (med7), found in Dictyostelium discoideum (Social amoeba).